Reading from the N-terminus, the 461-residue chain is Photosystem II CP43 reaction center protein (461 aa).

Positions 1–2 are excised as a propeptide; that stretch reads ME. Thr-3 bears the N-acetylthreonine mark. At Thr-3 the chain carries Phosphothreonine. 5 helical membrane-spanning segments follow: residues 57–81, 122–143, 166–188, 243–263, and 279–300; these read LFEV…PHLA, LAGP…KRKK, KAMY…RSIT, RPSP…LSYS, and WFNN…ASQA. Glu-355 contributes to the [CaMn4O5] cluster binding site. The chain crosses the membrane as a helical span at residues 435–459; it reads RARAAAIGFEKGIDRSREIARKLKP.

This sequence belongs to the PsbB/PsbC family. PsbC subfamily. PSII is composed of 1 copy each of membrane proteins PsbA, PsbB, PsbC, PsbD, PsbE, PsbF, PsbH, PsbI, PsbJ, PsbK, PsbL, PsbM, PsbT, PsbY, PsbZ, Psb30/Ycf12, at least 3 peripheral proteins of the oxygen-evolving complex and a large number of cofactors. It forms dimeric complexes. It depends on Binds multiple chlorophylls and provides some of the ligands for the Ca-4Mn-5O cluster of the oxygen-evolving complex. It may also provide a ligand for a Cl- that is required for oxygen evolution. PSII binds additional chlorophylls, carotenoids and specific lipids. as a cofactor.

Its subcellular location is the plastid. It localises to the chloroplast thylakoid membrane. One of the components of the core complex of photosystem II (PSII). It binds chlorophyll and helps catalyze the primary light-induced photochemical processes of PSII. PSII is a light-driven water:plastoquinone oxidoreductase, using light energy to abstract electrons from H(2)O, generating O(2) and a proton gradient subsequently used for ATP formation. In Euglena gracilis, this protein is Photosystem II CP43 reaction center protein.